A 428-amino-acid polypeptide reads, in one-letter code: Histidinol dehydrogenase (428 aa).

NAD(+) contacts are provided by Tyr125, Gln186, and Asn209. Substrate-binding residues include Ser232, Gln254, and His257. Residues Gln254 and His257 each coordinate Zn(2+). Active-site proton acceptor residues include Glu322 and His323. 4 residues coordinate substrate: His323, Asp356, Glu410, and His415. Asp356 is a binding site for Zn(2+). His415 provides a ligand contact to Zn(2+).

The protein belongs to the histidinol dehydrogenase family. Zn(2+) serves as cofactor.

The enzyme catalyses L-histidinol + 2 NAD(+) + H2O = L-histidine + 2 NADH + 3 H(+). Its pathway is amino-acid biosynthesis; L-histidine biosynthesis; L-histidine from 5-phospho-alpha-D-ribose 1-diphosphate: step 9/9. Catalyzes the sequential NAD-dependent oxidations of L-histidinol to L-histidinaldehyde and then to L-histidine. In Lactiplantibacillus plantarum (strain ATCC BAA-793 / NCIMB 8826 / WCFS1) (Lactobacillus plantarum), this protein is Histidinol dehydrogenase.